Reading from the N-terminus, the 299-residue chain is MNILLFGKTGQVGWELQRALAPLGNLIAFDVHSTDYCGDFSNPEGVAETVRSIRPDIIVNAAAHTAVDKAESEPEFAQLINATSVEAIAKAANEVGAWVIHYSTDYVFPGNGDMPWLETDATAPLNVYGETKLAGEKALQEYCAKHLIFRTSWVYAGKGNNFAKTMLRLAKEREELAVINDQFGAPTGAELLADCTAHAIRVALNKPDVAGLYHLVASGTTTWYDYAALVFEEARKAGIPLALNKLNAVPTTAYPTPARRPHNSRLNTEKFQQNFALVLPDWQVGVKRMLNELFTTTAI.

NADH-binding positions include 10–12 (GQV), aspartate 30, 39–40 (DF), and 63–65 (AHT). Position 11–12 (11–12 (QV)) interacts with NADPH. NADPH is bound by residues 39 to 40 (DF), 63 to 65 (AHT), and tyrosine 102. Residue 104–105 (TD) participates in dTDP-beta-L-rhamnose binding. Positions 128 and 132 each coordinate NADH. NADPH contacts are provided by tyrosine 128 and lysine 132. Tyrosine 128 serves as the catalytic Proton donor/acceptor. Tryptophan 153 serves as a coordination point for dTDP-beta-L-rhamnose.

Belongs to the dTDP-4-dehydrorhamnose reductase family. In terms of assembly, homodimer. Requires Mg(2+) as cofactor.

The catalysed reaction is dTDP-beta-L-rhamnose + NADP(+) = dTDP-4-dehydro-beta-L-rhamnose + NADPH + H(+). The protein operates within carbohydrate biosynthesis; dTDP-L-rhamnose biosynthesis. It functions in the pathway bacterial outer membrane biogenesis; LPS O-antigen biosynthesis. In terms of biological role, involved in the biosynthesis of the dTDP-L-rhamnose which is an important component of lipopolysaccharide (LPS). Catalyzes the reduction of dTDP-6-deoxy-L-lyxo-4-hexulose to yield dTDP-L-rhamnose. RmlD uses NADH and NADPH nearly equally well. In Escherichia coli (strain K12), this protein is dTDP-4-dehydrorhamnose reductase.